We begin with the raw amino-acid sequence, 98 residues long: Large ribosomal subunit protein uL23 (98 aa).

This sequence belongs to the universal ribosomal protein uL23 family. As to quaternary structure, part of the 50S ribosomal subunit. Contacts protein L29, and trigger factor when it is bound to the ribosome.

Its function is as follows. One of the early assembly proteins it binds 23S rRNA. One of the proteins that surrounds the polypeptide exit tunnel on the outside of the ribosome. Forms the main docking site for trigger factor binding to the ribosome. The polypeptide is Large ribosomal subunit protein uL23 (Gluconacetobacter diazotrophicus (strain ATCC 49037 / DSM 5601 / CCUG 37298 / CIP 103539 / LMG 7603 / PAl5)).